The following is a 283-amino-acid chain: Nopaline-binding periplasmic protein (283 aa).

The signal sequence occupies residues 1–25 (MKFFNLNALAAVVTGVLLAAGPTQA). A disulfide bond links Cys63 and Cys70.

This sequence belongs to the bacterial solute-binding protein 3 family.

It is found in the periplasm. Its function is as follows. Component of the nopaline active transport system probably consisting of four subunits: Q, M, P and T. This system is also capable of transporting octopine provided that catabolic functions are induced with nopaline. This Agrobacterium fabrum (strain C58 / ATCC 33970) (Agrobacterium tumefaciens (strain C58)) protein is Nopaline-binding periplasmic protein (nocT).